We begin with the raw amino-acid sequence, 264 residues long: 3-methyl-2-oxobutanoate hydroxymethyltransferase (264 aa).

Mg(2+)-binding residues include Asp-45 and Asp-84. Residues 45–46 (DS), Asp-84, and Lys-112 contribute to the 3-methyl-2-oxobutanoate site. Residue Glu-114 coordinates Mg(2+). Glu-181 (proton acceptor) is an active-site residue.

Belongs to the PanB family. Homodecamer; pentamer of dimers. Mg(2+) is required as a cofactor.

The protein resides in the cytoplasm. It carries out the reaction 3-methyl-2-oxobutanoate + (6R)-5,10-methylene-5,6,7,8-tetrahydrofolate + H2O = 2-dehydropantoate + (6S)-5,6,7,8-tetrahydrofolate. It participates in cofactor biosynthesis; (R)-pantothenate biosynthesis; (R)-pantoate from 3-methyl-2-oxobutanoate: step 1/2. In terms of biological role, catalyzes the reversible reaction in which hydroxymethyl group from 5,10-methylenetetrahydrofolate is transferred onto alpha-ketoisovalerate to form ketopantoate. This Escherichia coli (strain K12 / MC4100 / BW2952) protein is 3-methyl-2-oxobutanoate hydroxymethyltransferase.